The chain runs to 494 residues: Tripartite motif-containing protein 5 (494 aa).

A2 is subject to N-acetylalanine. The RING-type zinc finger occupies 15–59; that stretch reads CPICLELLTEPLSLDCGHSFCQACITANHKESTLHQGERSCPLCR. S86 carries the phosphoserine modification. A B box-type zinc finger spans residues 91 to 132; sequence QKVDHCARHGEKLLLFCQQDGNVICWLCERSQEHRGHHTFLV. The Zn(2+) site is built by C96, H99, C118, and H124. The stretch at 132-223 forms a coiled coil; the sequence is VEEVAEKYQG…RLVQSESDMV (92 aa). The segment at 186–199 is required for interaction with GABARAP and for autophagy; that stretch reads FKQLRDILDCEESK. The B30.2/SPRY domain maps to 280 to 494; it reads PDLKGMLQAF…LPMTLCSPSS (215 aa).

The protein belongs to the TRIM/RBCC family. In terms of assembly, can form homodimers and homotrimers. In addition to lower-order dimerization, also exhibits a higher-order multimerization and both low- and high-order multimerizations are essential for its restriction activity. Interacts with BTBD1 and BTBD2. Interacts with PSMC4, PSMC5, PSMD7 and HSPA8/HSC70. Interacts (via B30.2/SPRY domain) with HSPA1A/B. Interacts with PSMC2, MAP3K7/TAK1, TAB2 and TAB3. Interacts with SQSTM1. Interacts with TRIM6 and TRIM34. Interacts with ULK1 (phosphorylated form), GABARAP, GABARAPL1, GABARAPL2, MAP1LC3A, MAP1LC3C and BECN1. Post-translationally, degraded in a proteasome-independent fashion in the absence of viral infection but in a proteasome-dependent fashion following exposure to restriction sensitive virus. Autoubiquitinated in a RING finger- and UBE2D2-dependent manner. Monoubiquitinated by TRIM21. Deubiquitinated by Yersinia YopJ. Ubiquitination may not lead to proteasomal degradation.

The protein resides in the cytoplasm. It is found in the nucleus. The catalysed reaction is S-ubiquitinyl-[E2 ubiquitin-conjugating enzyme]-L-cysteine + [acceptor protein]-L-lysine = [E2 ubiquitin-conjugating enzyme]-L-cysteine + N(6)-ubiquitinyl-[acceptor protein]-L-lysine.. The protein operates within protein modification; protein ubiquitination. Its function is as follows. Capsid-specific restriction factor that prevents infection from non-host-adapted retroviruses. Blocks viral replication early in the life cycle, after viral entry but before reverse transcription. In addition to acting as a capsid-specific restriction factor, also acts as a pattern recognition receptor that activates innate immune signaling in response to the retroviral capsid lattice. Binding to the viral capsid triggers its E3 ubiquitin ligase activity, and in concert with the heterodimeric ubiquitin conjugating enzyme complex UBE2V1-UBE2N (also known as UBC13-UEV1A complex) generates 'Lys-63'-linked polyubiquitin chains, which in turn are catalysts in the autophosphorylation of the MAP3K7/TAK1 complex (includes TAK1, TAB2, and TAB3). Activation of the MAP3K7/TAK1 complex by autophosphorylation results in the induction and expression of NF-kappa-B and MAPK-responsive inflammatory genes, thereby leading to an innate immune response in the infected cell. Plays a role in regulating autophagy through activation of autophagy regulator BECN1 by causing its dissociation from its inhibitors BCL2 and TAB2. In Cebuella pygmaea (Pygmy marmoset), this protein is Tripartite motif-containing protein 5 (TRIM5).